Reading from the N-terminus, the 146-residue chain is Kappa-casein (146 aa).

Thr97, Thr107, Thr112, and Thr118 each carry an O-linked (GalNAc...) threonine glycan. Residue Thr121 is modified to Phosphothreonine. Ser125 is subject to Phosphoserine; alternate. A glycan (O-linked (GalNAc...) serine; alternate) is linked at Ser125. Thr142 is a glycosylation site (O-linked (GalNAc...) threonine). Ser143 is modified (phosphoserine).

This sequence belongs to the kappa-casein family. Mammary gland specific. Secreted in milk.

The protein resides in the secreted. In terms of biological role, kappa-casein stabilizes micelle formation, preventing casein precipitation in milk. The polypeptide is Kappa-casein (CSN3) (Panthera uncia (Snow leopard)).